Reading from the N-terminus, the 330-residue chain is tRNA N6-adenosine threonylcarbamoyltransferase (330 aa).

Residues H110 and H114 each contribute to the Fe cation site. Residues 133–137 (MVSGG), D166, G179, D183, and N271 contribute to the substrate site. Fe cation is bound at residue D299.

It belongs to the KAE1 / TsaD family. Requires Fe(2+) as cofactor.

It is found in the cytoplasm. The enzyme catalyses L-threonylcarbamoyladenylate + adenosine(37) in tRNA = N(6)-L-threonylcarbamoyladenosine(37) in tRNA + AMP + H(+). Functionally, required for the formation of a threonylcarbamoyl group on adenosine at position 37 (t(6)A37) in tRNAs that read codons beginning with adenine. Is involved in the transfer of the threonylcarbamoyl moiety of threonylcarbamoyl-AMP (TC-AMP) to the N6 group of A37, together with TsaE and TsaB. TsaD likely plays a direct catalytic role in this reaction. This Thermosipho africanus (strain TCF52B) protein is tRNA N6-adenosine threonylcarbamoyltransferase.